Here is a 529-residue protein sequence, read N- to C-terminus: Beta-galactoside alpha-2,6-sialyltransferase 2 (529 aa).

Over 1–11 (MKPHLKQWRQR) the chain is Cytoplasmic. The chain crosses the membrane as a helical; Signal-anchor for type II membrane protein span at residues 12–32 (MLFGIFAWGLLFLLIFIYFTD). The Lumenal portion of the chain corresponds to 33–529 (SNPAEPVPSS…PAPSPVIPHS (497 aa)). O-linked (GalNAc...) serine glycosylation occurs at S69. The N-linked (GlcNAc...) asparagine glycan is linked to N211. 3 disulfide bridges follow: C253-C519, C296-C448, and C466-C477.

Belongs to the glycosyltransferase 29 family. Post-translationally, O-glycosylated. Weakly expressed in some tissues, such as small intestine, colon and fetal brain.

The protein localises to the golgi apparatus. The protein resides in the golgi stack membrane. The enzyme catalyses a beta-D-galactoside + CMP-N-acetyl-beta-neuraminate = an N-acetyl-alpha-neuraminyl-(2-&gt;6)-beta-D-galactosyl derivative + CMP + H(+). Its function is as follows. Transfers sialic acid from the donor of substrate CMP-sialic acid to galactose containing acceptor substrates. Has alpha-2,6-sialyltransferase activity toward oligosaccharides that have the Gal-beta-1,4-GlcNAc sequence at the non-reducing end of their carbohydrate groups, but it has weak or no activities toward glycoproteins and glycolipids. The sequence is that of Beta-galactoside alpha-2,6-sialyltransferase 2 (ST6GAL2) from Homo sapiens (Human).